The primary structure comprises 180 residues: MASSVLSSAAVATVSRTPAQASMVAPFTGLKSTVGFPATKKNDDITSLASNGGRVQCMKVWPTQNMKRYETLSYLPPLTTDQLARQVDYLLNNKWVPCLEFETDHGFVYREHHNSPGYYDGRYWTMWKLPMFGCTDPAQVLNELEECKKEYPNAFIRIIGFDSNRQVQCVSFIAYKPAGY.

The transit peptide at 1 to 56 (MASSVLSSAAVATVSRTPAQASMVAPFTGLKSTVGFPATKKNDDITSLASNGGRVQ) directs the protein to the chloroplast.

This sequence belongs to the RuBisCO small chain family. In terms of assembly, heterohexadecamer of 8 large and 8 small subunits.

The protein localises to the plastid. It localises to the chloroplast. RuBisCO catalyzes two reactions: the carboxylation of D-ribulose 1,5-bisphosphate, the primary event in carbon dioxide fixation, as well as the oxidative fragmentation of the pentose substrate. Both reactions occur simultaneously and in competition at the same active site. Although the small subunit is not catalytic it is essential for maximal activity. The protein is Ribulose bisphosphate carboxylase small subunit, chloroplastic 2 of Spinacia oleracea (Spinach).